The following is a 124-amino-acid chain: Secretion system apparatus protein SsaP (124 aa).

This chain is Secretion system apparatus protein SsaP (ssaP), found in Salmonella typhi.